We begin with the raw amino-acid sequence, 157 residues long: Small ribosomal subunit protein uS7 (157 aa).

The protein belongs to the universal ribosomal protein uS7 family. In terms of assembly, part of the 30S ribosomal subunit. Contacts proteins S9 and S11.

Functionally, one of the primary rRNA binding proteins, it binds directly to 16S rRNA where it nucleates assembly of the head domain of the 30S subunit. Is located at the subunit interface close to the decoding center, probably blocks exit of the E-site tRNA. In Leptospira interrogans serogroup Icterohaemorrhagiae serovar copenhageni (strain Fiocruz L1-130), this protein is Small ribosomal subunit protein uS7.